The primary structure comprises 160 residues: Cytochrome b6-f complex subunit 4 (160 aa).

3 helical membrane passes run 36-56 (LLYI…GLSV), 95-115 (LLGV…PFIE), and 127-147 (PVAM…GIGA).

Belongs to the cytochrome b family. PetD subfamily. In terms of assembly, the 4 large subunits of the cytochrome b6-f complex are cytochrome b6, subunit IV (17 kDa polypeptide, petD), cytochrome f and the Rieske protein, while the 4 small subunits are petG, petL, petM and petN. The complex functions as a dimer.

Its subcellular location is the plastid. The protein resides in the chloroplast thylakoid membrane. Component of the cytochrome b6-f complex, which mediates electron transfer between photosystem II (PSII) and photosystem I (PSI), cyclic electron flow around PSI, and state transitions. This is Cytochrome b6-f complex subunit 4 from Guillardia theta (Cryptophyte).